The primary structure comprises 126 residues: Small ribosomal subunit protein uS11 (126 aa).

Belongs to the universal ribosomal protein uS11 family. Part of the 30S ribosomal subunit.

In terms of biological role, located on the platform of the 30S subunit. The polypeptide is Small ribosomal subunit protein uS11 (Methanosarcina mazei (strain ATCC BAA-159 / DSM 3647 / Goe1 / Go1 / JCM 11833 / OCM 88) (Methanosarcina frisia)).